The following is a 1001-amino-acid chain: Ulvan lyase, long isoform (1001 aa).

The first 21 residues, 1–21 (MNGLKMLLFSTTLLTAFTLHA), serve as a signal peptide directing secretion. 126-127 (SH) is a binding site for substrate. The Proton donor/acceptor role is filled by H127. Positions 189, 199, and 201 each coordinate Ca(2+). The substrate site is built by Y280 and R297. Ca(2+) contacts are provided by D300, D303, and Y305. Residue Y361 participates in substrate binding.

This sequence belongs to the polysaccharide lyase 24 family.

Functionally, ulvan lyase involved in ulvan degradation. Ulvan is the main polysaccharide component of the Ulvales (green seaweed) cell wall. It is composed of disaccharide building blocks comprising 3-sulfated rhamnose (Rha3S) linked to D-glucuronic acid (GlcA), L-iduronic acid (IduA), or D-xylose (Xyl). Ulvan lyase catalyzes preferentially the endolytic cleavage of the glycosidic bond between Rha3S and the uronic acid GlcA, but not IduA, producing oligosaccharides that have unsaturated 4-deoxy-L-threo-hex-4-enopyranosiduronic acid (deltaUA) at the non-reducing end. The most abundant end products in the degradation of the ulvan polysaccharide were deltaUA-Rha3S disaccharides and deltaUA-Rha3S-IduA-Rha3S and deltaUA-Rha3S-Xyl-Rha3S tetrasaccharides. The chain is Ulvan lyase, long isoform from Pseudoalteromonas sp. (strain PLSV).